The sequence spans 378 residues: Spermidine/putrescine import ATP-binding protein PotA (378 aa).

An ABC transporter domain is found at 18–248; the sequence is VQLAGIRKCF…PKNLFVAGFI (231 aa). Position 50-57 (50-57) interacts with ATP; sequence GPSGCGKT.

The protein belongs to the ABC transporter superfamily. Spermidine/putrescine importer (TC 3.A.1.11.1) family. The complex is composed of two ATP-binding proteins (PotA), two transmembrane proteins (PotB and PotC) and a solute-binding protein (PotD).

The protein resides in the cell inner membrane. The enzyme catalyses ATP + H2O + polyamine-[polyamine-binding protein]Side 1 = ADP + phosphate + polyamineSide 2 + [polyamine-binding protein]Side 1.. Its function is as follows. Part of the ABC transporter complex PotABCD involved in spermidine/putrescine import. Responsible for energy coupling to the transport system. The polypeptide is Spermidine/putrescine import ATP-binding protein PotA (Shigella dysenteriae serotype 1 (strain Sd197)).